Consider the following 346-residue polypeptide: Ferredoxin--NADP reductase 1 (346 aa).

FAD is bound by residues Glu37, Lys45, Tyr49, Ile89, Pro124, Asp287, and Ser328.

It belongs to the ferredoxin--NADP reductase type 2 family. In terms of assembly, homodimer. Requires FAD as cofactor.

It carries out the reaction 2 reduced [2Fe-2S]-[ferredoxin] + NADP(+) + H(+) = 2 oxidized [2Fe-2S]-[ferredoxin] + NADPH. In Bacillus pumilus (strain SAFR-032), this protein is Ferredoxin--NADP reductase 1.